The chain runs to 519 residues: MHGGQGPQLLLLLLATCLGAQSRNQEERLLADLMRNYDPHLRPAERDSDVVNVSLKLTLTNLISLNEREEALTTNVWIEMQWCDYRLRWDPKDYEGLWILRVPSTMVWQPDIVLGNNVDGVFEVALYCNVLVSPDGCIYWLPPAIFRSSCSISVTYFPFDWQNCSLVFQSQTYSTSEINLQLSQEDGQAIEWIFIDPEAFTENGEWAIRHRPAKMLLDPVTPAEEAGHQKVVFYLLIQRKPLFYVINIIVPCVLISSVAILIYFLPAKAGGQKCTVATNVLLAQTVFLFLVAKKVPETSQAVPLISKYLTFLMVVTILIVVNSVVVLNVSLRSPHTHSMARGVRKVFLRLLPQLLRMHVHPRAPAAVQDARLRLQNGSSSGWPIMTREEGDLCLPRSELLFRQRQRNGLVQAVLEKLENGPEMRQSQEFCGSLKQASPAIQACVDACNLMARARHQQSHFDSGNEEWLLVGRVLDRVCFLAMLSLFICGTAGIFLMAHYNQVPDLPFPGDPRPYLPLPD.

The signal sequence occupies residues 1-22 (MHGGQGPQLLLLLLATCLGAQS). The Extracellular portion of the chain corresponds to 23 to 240 (RNQEERLLAD…VVFYLLIQRK (218 aa)). Residues Asn-52 and Asn-163 are each glycosylated (N-linked (GlcNAc...) asparagine). Cys-150 and Cys-164 are oxidised to a cystine. 3 consecutive transmembrane segments (helical) span residues 241-265 (PLFY…IYFL), 274-292 (CTVA…FLVA), and 308-329 (YLTF…VLNV). The Cytoplasmic segment spans residues 330–476 (SLRSPHTHSM…WLLVGRVLDR (147 aa)). A helical membrane pass occupies residues 477 to 497 (VCFLAMLSLFICGTAGIFLMA).

Belongs to the ligand-gated ion channel (TC 1.A.9) family. Acetylcholine receptor (TC 1.A.9.1) subfamily. Gamma/CHRNG sub-subfamily. In terms of assembly, pentamer of two alpha chains, and one each of the beta, delta, and gamma (in immature muscle) or epsilon (in mature muscle) chains.

The protein resides in the postsynaptic cell membrane. It is found in the cell membrane. The catalysed reaction is K(+)(in) = K(+)(out). It catalyses the reaction Na(+)(in) = Na(+)(out). In terms of biological role, after binding acetylcholine, the AChR responds by an extensive change in conformation that affects all subunits and leads to opening of an ion-conducting channel across the plasma membrane. This is Acetylcholine receptor subunit gamma (Chrng) from Rattus norvegicus (Rat).